Reading from the N-terminus, the 1305-residue chain is Contactin-associated protein like 5-1 (1305 aa).

An N-terminal signal peptide occupies residues 1–24; that stretch reads MDSLQRLNGLLTLVLSALWHLGLT. Residues 25–174 form the F5/8 type C domain; that stretch reads ASNYNCDDPL…IGMRVEAYGC (150 aa). 2 Laminin G-like domains span residues 180–360 and 367–544; these read VADF…TFSC and PITF…IDLC. An N-linked (GlcNAc...) asparagine glycan is attached at Asn282. Cys329 and Cys360 are disulfide-bonded. Asn496 carries an N-linked (GlcNAc...) asparagine glycan. 3 disulfide bridges follow: Cys512–Cys544, Cys550–Cys561, and Cys555–Cys570. The EGF-like 1 domain occupies 546 to 583; the sequence is IKDRCLPNYCEHGGHCAQTWTTFYCNCSDTGYTGATCH. A glycan (N-linked (GlcNAc...) asparagine) is linked at Asn571. An intrachain disulfide couples Cys572 to Cys582. In terms of domain architecture, Fibrinogen C-terminal spans 584–790; that stretch reads DSIYEQSCEV…LRCNGDRHFW (207 aa). An N-linked (GlcNAc...) asparagine glycan is attached at Asn622. A Laminin G-like 3 domain is found at 791–956; the sequence is NAVSFSTEAS…KLMSGVTPGC (166 aa). 4 disulfides stabilise this stretch: Cys929–Cys956, Cys960–Cys973, Cys967–Cys982, and Cys984–Cys994. Positions 957–995 constitute an EGF-like 2 domain; sequence PGHCSSYSSNCHNGGKCVEKQSGYSCDCTNSPNEGPFCQ. A Laminin G-like 4 domain is found at 1014–1198; sequence EPYLVIKNTS…VHGTLTESGC (185 aa). N-linked (GlcNAc...) asparagine glycosylation occurs at Asn1057. A disulfide bridge connects residues Cys1163 and Cys1198. A helical membrane pass occupies residues 1238–1258; that stretch reads VIGGIIAVVTFVTFCVIGIMI.

Belongs to the neurexin family.

The protein resides in the membrane. May play a role in the correct development and proper functioning of the peripheral and central nervous system and be involved in cell adhesion and intercellular communication. In Rattus norvegicus (Rat), this protein is Contactin-associated protein like 5-1 (Cntnap5a).